The chain runs to 658 residues: Glycogen debranching enzyme (658 aa).

Asp-336 serves as the catalytic Nucleophile. The Proton donor role is filled by Glu-371. The segment at 459–484 (EANGEENRDGTNSNYSDNHGKEGLGG) is disordered.

This sequence belongs to the glycosyl hydrolase 13 family.

The catalysed reaction is Hydrolysis of (1-&gt;6)-alpha-D-glucosidic linkages to branches with degrees of polymerization of three or four glucose residues in limit dextrin.. The protein operates within glycan degradation; glycogen degradation. In terms of biological role, removes maltotriose and maltotetraose chains that are attached by 1,6-alpha-linkage to the limit dextrin main chain, generating a debranched limit dextrin. In Salmonella dublin (strain CT_02021853), this protein is Glycogen debranching enzyme.